Consider the following 26-residue polypeptide: uncharacterized protein (26 aa).

This is an uncharacterized protein from Escherichia coli (strain K12).